We begin with the raw amino-acid sequence, 189 residues long: Transcription factor E (189 aa).

An HTH TFE/IIEalpha-type domain is found at 9 to 101; the sequence is AVKSLEIYVR…FWRIDSDTIN (93 aa).

Belongs to the TFE family. In terms of assembly, monomer. Interaction with RNA polymerase subunits RpoF and RpoE is necessary for Tfe stimulatory transcription activity. Able to interact with Tbp and RNA polymerase in the absence of DNA promoter. Interacts both with the preinitiation and elongation complexes.

Transcription factor that plays a role in the activation of archaeal genes transcribed by RNA polymerase. Facilitates transcription initiation by enhancing TATA-box recognition by TATA-box-binding protein (Tbp), and transcription factor B (Tfb) and RNA polymerase recruitment. Not absolutely required for transcription in vitro, but particularly important in cases where Tbp or Tfb function is not optimal. It dynamically alters the nucleic acid-binding properties of RNA polymerases by stabilizing the initiation complex and destabilizing elongation complexes. Seems to translocate with the RNA polymerase following initiation and acts by binding to the non template strand of the transcription bubble in elongation complexes. The chain is Transcription factor E from Aeropyrum pernix (strain ATCC 700893 / DSM 11879 / JCM 9820 / NBRC 100138 / K1).